The chain runs to 376 residues: Cyclin-dependent kinase 9 (376 aa).

The region spanning 19-319 (YERLAKIGQG…SDDALNHDFF (301 aa)) is the Protein kinase domain. ATP-binding positions include 25–33 (IGQGTFGEV) and lysine 48. Catalysis depends on aspartate 153, which acts as the Proton acceptor. Residues 345-376 (PPRRRGGHMPQQPANQARNPAATNQSEFDRVF) are disordered. The span at 354–369 (PQQPANQARNPAATNQ) shows a compositional bias: low complexity.

Belongs to the protein kinase superfamily. CMGC Ser/Thr protein kinase family. CDC2/CDKX subfamily. Associates with cyclin-T to form P-TEFb.

It localises to the nucleus. It catalyses the reaction L-seryl-[protein] + ATP = O-phospho-L-seryl-[protein] + ADP + H(+). The enzyme catalyses L-threonyl-[protein] + ATP = O-phospho-L-threonyl-[protein] + ADP + H(+). It carries out the reaction [DNA-directed RNA polymerase] + ATP = phospho-[DNA-directed RNA polymerase] + ADP + H(+). Its function is as follows. Member of the cyclin-dependent kinase pair (CDK9/cyclin-T) complex, also called positive transcription elongation factor B (P-TEFb), which is proposed to facilitate the transition from abortive to production elongation by phosphorylating the CTD (C-terminal domain) of the large subunit of RNA polymerase II (RNAP II) and SUPT5H. This chain is Cyclin-dependent kinase 9 (cdk9), found in Xenopus tropicalis (Western clawed frog).